Here is a 572-residue protein sequence, read N- to C-terminus: DnaJ protein ERDJ3A (572 aa).

Positions 1–23 are cleaved as a signal peptide; sequence MVRTRLAISVVLVSTLLLLNVKA. Positions 27–91 constitute a J domain; sequence DPYKVLGVSK…EKRKNYDLYG (65 aa). The stretch at 394–423 forms a coiled coil; that stretch reads ITVKNLKSAVQELGKLLEGLEKKNKKVSSK. Positions 419–439 are disordered; it reads KVSSKSQAGQAPNESSEKIPL. Positions 422–432 are enriched in polar residues; the sequence is SKSQAGQAPNE. An N-linked (GlcNAc...) asparagine glycan is attached at N431.

As to quaternary structure, interacts with BIP1 and BIP3. The interaction with BIP1 and BIP3 activates the ATPase enzyme activities of BIP1 and BIP3. Post-translationally, not N-glycosylated. Expressed in roots, leaves, stems, flowers, mature pollen grains and growing pollen tubes.

It is found in the endoplasmic reticulum lumen. In terms of biological role, regulates protein folding in the endoplasmic reticulum (ER) lumen. Functions probably as a co-molecular chaperone that is required for normal growth of pollen tubes under high-temperature stress. The sequence is that of DnaJ protein ERDJ3A (ERDJ3A) from Arabidopsis thaliana (Mouse-ear cress).